The primary structure comprises 234 residues: Ribose-5-phosphate isomerase A (234 aa).

Substrate contacts are provided by residues 28–31 (TGST), 85–88 (DGAD), and 98–101 (KGLG). E107 (proton acceptor) is an active-site residue. K125 serves as a coordination point for substrate.

It belongs to the ribose 5-phosphate isomerase family. As to quaternary structure, homodimer.

The enzyme catalyses aldehydo-D-ribose 5-phosphate = D-ribulose 5-phosphate. Its pathway is carbohydrate degradation; pentose phosphate pathway; D-ribose 5-phosphate from D-ribulose 5-phosphate (non-oxidative stage): step 1/1. In terms of biological role, catalyzes the reversible conversion of ribose-5-phosphate to ribulose 5-phosphate. This Roseiflexus castenholzii (strain DSM 13941 / HLO8) protein is Ribose-5-phosphate isomerase A.